The chain runs to 354 residues: Probable L-ascorbate-6-phosphate lactonase UlaG (354 aa).

Belongs to the UlaG family. A divalent metal cation is required as a cofactor.

It localises to the cytoplasm. The catalysed reaction is L-ascorbate 6-phosphate + H2O = 3-dehydro-L-gulonate 6-phosphate. It participates in cofactor degradation; L-ascorbate degradation; D-xylulose 5-phosphate from L-ascorbate: step 1/4. Probably catalyzes the hydrolysis of L-ascorbate-6-P into 3-keto-L-gulonate-6-P. Is essential for L-ascorbate utilization under anaerobic conditions. The polypeptide is Probable L-ascorbate-6-phosphate lactonase UlaG (Escherichia coli O139:H28 (strain E24377A / ETEC)).